A 224-amino-acid chain; its full sequence is Peroxiredoxin-6 (224 aa).

One can recognise a Thioredoxin domain in the interval 5–169 (LLLGDEAPNF…ILRVIISLQL (165 aa)). Positions 31–40 (DSWGILFSHP) are required and sufficient for targeting to lysosomes and lamellar bodies. T44 bears the Phosphothreonine mark. C47 functions as the Cysteine sulfenic acid (-SOH) intermediate; for peroxidase activity in the catalytic mechanism. The residue at position 63 (K63) is an N6-acetyllysine. Y89 bears the Phosphotyrosine mark. D140 (for phospholipase activity) is an active-site residue. At T177 the chain carries Phosphothreonine; by MAPK. The residue at position 209 (K209) is an N6-acetyllysine; alternate. K209 bears the N6-succinyllysine; alternate mark.

The protein belongs to the peroxiredoxin family. Prx6 subfamily. In terms of assembly, homodimer. Interacts with GSTP1; mediates PRDX6 glutathionylation and regeneration. Interacts with APEX1. Interacts with STH. May interact with FAM168B. May interact with HTR2A. Irreversibly inactivated by overoxidation of Cys-47 to sulfinic acid (Cys-SO(2)H) and sulfonic acid (Cys-SO(3)H) forms upon oxidative stress. In terms of processing, phosphorylation at Thr-177 by MAP kinases increases the phospholipase activity of the enzyme. The phosphorylated form exhibits a greater lysophosphatidylcholine acyltransferase activity compared to the non-phosphorylated form.

The protein localises to the cytoplasm. It is found in the lysosome. It catalyses the reaction a hydroperoxide + 2 glutathione = an alcohol + glutathione disulfide + H2O. The catalysed reaction is a 1,2-diacyl-sn-glycero-3-phosphocholine + H2O = a 1-acyl-sn-glycero-3-phosphocholine + a fatty acid + H(+). It carries out the reaction a 1-acyl-sn-glycero-3-phosphocholine + an acyl-CoA = a 1,2-diacyl-sn-glycero-3-phosphocholine + CoA. The enzyme catalyses 1-hexadecanoyl-sn-glycero-3-phosphocholine + hexadecanoyl-CoA = 1,2-dihexadecanoyl-sn-glycero-3-phosphocholine + CoA. It catalyses the reaction 1,2-dihexadecanoyl-sn-glycero-3-phosphocholine + H2O = 1-hexadecanoyl-sn-glycero-3-phosphocholine + hexadecanoate + H(+). In terms of biological role, thiol-specific peroxidase that catalyzes the reduction of hydrogen peroxide and organic hydroperoxides to water and alcohols, respectively. Can reduce H(2)O(2) and short chain organic, fatty acid, and phospholipid hydroperoxides. Also has phospholipase activity, and can therefore either reduce the oxidized sn-2 fatty acyl group of phospholipids (peroxidase activity) or hydrolyze the sn-2 ester bond of phospholipids (phospholipase activity). These activities are dependent on binding to phospholipids at acidic pH and to oxidized phospholipds at cytosolic pH. Plays a role in cell protection against oxidative stress by detoxifying peroxides and in phospholipid homeostasis. Exhibits acyl-CoA-dependent lysophospholipid acyltransferase which mediates the conversion of lysophosphatidylcholine (1-acyl-sn-glycero-3-phosphocholine or LPC) into phosphatidylcholine (1,2-diacyl-sn-glycero-3-phosphocholine or PC). Shows a clear preference for LPC as the lysophospholipid and for palmitoyl CoA as the fatty acyl substrate. The sequence is that of Peroxiredoxin-6 (PRDX6) from Sus scrofa (Pig).